A 573-amino-acid chain; its full sequence is Isocitrate dehydrogenase kinase/phosphatase (573 aa).

Residues 318-324 and Lys-339 contribute to the ATP site; that span reads APGVRGM. Residue Asp-374 is part of the active site.

It belongs to the AceK family.

The protein resides in the cytoplasm. It catalyses the reaction L-seryl-[isocitrate dehydrogenase] + ATP = O-phospho-L-seryl-[isocitrate dehydrogenase] + ADP + H(+). Functionally, bifunctional enzyme which can phosphorylate or dephosphorylate isocitrate dehydrogenase (IDH) on a specific serine residue. This is a regulatory mechanism which enables bacteria to bypass the Krebs cycle via the glyoxylate shunt in response to the source of carbon. When bacteria are grown on glucose, IDH is fully active and unphosphorylated, but when grown on acetate or ethanol, the activity of IDH declines drastically concomitant with its phosphorylation. The polypeptide is Isocitrate dehydrogenase kinase/phosphatase (Stutzerimonas stutzeri (strain A1501) (Pseudomonas stutzeri)).